The sequence spans 51 residues: Large ribosomal subunit protein eL39 (51 aa).

It belongs to the eukaryotic ribosomal protein eL39 family.

This Pyrobaculum aerophilum (strain ATCC 51768 / DSM 7523 / JCM 9630 / CIP 104966 / NBRC 100827 / IM2) protein is Large ribosomal subunit protein eL39 (rpl39e).